The following is a 288-amino-acid chain: Energy-coupling factor transporter ATP-binding protein EcfA2 (288 aa).

One can recognise an ABC transporter domain in the interval 3–246; it reads IKLEQLGYCY…PDELVDLGLS (244 aa). 40–47 is a binding site for ATP; it reads GHTGSGKS.

This sequence belongs to the ABC transporter superfamily. Energy-coupling factor EcfA family. Forms a stable energy-coupling factor (ECF) transporter complex composed of 2 membrane-embedded substrate-binding proteins (S component), 2 ATP-binding proteins (A component) and 2 transmembrane proteins (T component).

It is found in the cell membrane. Functionally, ATP-binding (A) component of a common energy-coupling factor (ECF) ABC-transporter complex. Unlike classic ABC transporters this ECF transporter provides the energy necessary to transport a number of different substrates. The protein is Energy-coupling factor transporter ATP-binding protein EcfA2 of Listeria monocytogenes serotype 4b (strain F2365).